The sequence spans 132 residues: Large ribosomal subunit protein uL14 (132 aa).

The protein belongs to the universal ribosomal protein uL14 family. As to quaternary structure, part of the 50S ribosomal subunit. Forms a cluster with proteins L3 and L24e, part of which may contact the 16S rRNA in 2 intersubunit bridges.

Its function is as follows. Binds to 23S rRNA. Forms part of two intersubunit bridges in the 70S ribosome. In Natronomonas pharaonis (strain ATCC 35678 / DSM 2160 / CIP 103997 / JCM 8858 / NBRC 14720 / NCIMB 2260 / Gabara) (Halobacterium pharaonis), this protein is Large ribosomal subunit protein uL14.